Reading from the N-terminus, the 322-residue chain is Triosephosphate isomerase, chloroplastic (322 aa).

A chloroplast-targeting transit peptide spans Met-1–Met-67. The substrate site is built by Asn-78 and Lys-80. The active-site Electrophile is His-162. Glu-232 serves as the catalytic Proton acceptor.

It belongs to the triosephosphate isomerase family. Homodimer.

It is found in the plastid. Its subcellular location is the chloroplast. The catalysed reaction is D-glyceraldehyde 3-phosphate = dihydroxyacetone phosphate. Its pathway is carbohydrate biosynthesis; Calvin cycle. The chain is Triosephosphate isomerase, chloroplastic (TPIP1) from Spinacia oleracea (Spinach).